Reading from the N-terminus, the 116-residue chain is Large ribosomal subunit protein bL17 (116 aa).

It belongs to the bacterial ribosomal protein bL17 family. In terms of assembly, part of the 50S ribosomal subunit. Contacts protein L32.

This Chloroflexus aurantiacus (strain ATCC 29366 / DSM 635 / J-10-fl) protein is Large ribosomal subunit protein bL17.